Reading from the N-terminus, the 492-residue chain is ATP synthase subunit beta, chloroplastic (492 aa).

170-177 serves as a coordination point for ATP; sequence GGAGVGKT.

Belongs to the ATPase alpha/beta chains family. As to quaternary structure, F-type ATPases have 2 components, CF(1) - the catalytic core - and CF(0) - the membrane proton channel. CF(1) has five subunits: alpha(3), beta(3), gamma(1), delta(1), epsilon(1). CF(0) has four main subunits: a(1), b(1), b'(1) and c(9-12).

It localises to the plastid. The protein localises to the chloroplast thylakoid membrane. It carries out the reaction ATP + H2O + 4 H(+)(in) = ADP + phosphate + 5 H(+)(out). Its function is as follows. Produces ATP from ADP in the presence of a proton gradient across the membrane. The catalytic sites are hosted primarily by the beta subunits. This chain is ATP synthase subunit beta, chloroplastic, found in Pinus thunbergii (Japanese black pine).